A 370-amino-acid chain; its full sequence is Arginine kinase (370 aa).

A Phosphagen kinase N-terminal domain is found at 6–89; that stretch reads QKKYPAKDDF…FDPVIEEYHN (84 aa). The 244-residue stretch at 115 to 358 folds into the Phosphagen kinase C-terminal domain; the sequence is YVISSRVRTG…KVLIEMEKKL (244 aa). ATP is bound by residues 118–122 and histidine 181; that span reads SSRVR. Substrate is bound at residue glutamate 222. Arginine 226 lines the ATP pocket. A substrate-binding site is contributed by cysteine 274. ATP-binding positions include 283–287 and 311–316; these read RCSVH and RGTSGE. Glutamate 316 is a substrate binding site.

This sequence belongs to the ATP:guanido phosphotransferase family. In terms of assembly, homodimer. In terms of processing, the N-terminus is blocked.

It carries out the reaction L-arginine + ATP = N(omega)-phospho-L-arginine + ADP + H(+). The sequence is that of Arginine kinase (AK) from Stichopus japonicus (Sea cucumber).